A 550-amino-acid chain; its full sequence is CTP synthase (550 aa).

Residues 1–272 (MKTKFIFITG…DQKITSFLNL (272 aa)) form an amidoligase domain region. S14 lines the CTP pocket. S14 contributes to the UTP binding site. Residue 15–20 (SLGKGL) coordinates ATP. Y55 is an L-glutamine binding site. D72 contributes to the ATP binding site. Positions 72 and 146 each coordinate Mg(2+). Residues 153-155 (DIE), 193-198 (KTKPTQ), and K229 each bind CTP. Residues 193–198 (KTKPTQ) and K229 each bind UTP. A Glutamine amidotransferase type-1 domain is found at 297–550 (TITIVGKYVG…IHAACNHNKQ (254 aa)). G359 contributes to the L-glutamine binding site. Residue C386 is the Nucleophile; for glutamine hydrolysis of the active site. Residues 387–390 (LGMQ), E410, and R478 each bind L-glutamine. Active-site residues include H523 and E525.

It belongs to the CTP synthase family. In terms of assembly, homotetramer.

The catalysed reaction is UTP + L-glutamine + ATP + H2O = CTP + L-glutamate + ADP + phosphate + 2 H(+). The enzyme catalyses L-glutamine + H2O = L-glutamate + NH4(+). It carries out the reaction UTP + NH4(+) + ATP = CTP + ADP + phosphate + 2 H(+). The protein operates within pyrimidine metabolism; CTP biosynthesis via de novo pathway; CTP from UDP: step 2/2. With respect to regulation, allosterically activated by GTP, when glutamine is the substrate; GTP has no effect on the reaction when ammonia is the substrate. The allosteric effector GTP functions by stabilizing the protein conformation that binds the tetrahedral intermediate(s) formed during glutamine hydrolysis. Inhibited by the product CTP, via allosteric rather than competitive inhibition. Functionally, catalyzes the ATP-dependent amination of UTP to CTP with either L-glutamine or ammonia as the source of nitrogen. Regulates intracellular CTP levels through interactions with the four ribonucleotide triphosphates. This is CTP synthase from Lawsonia intracellularis (strain PHE/MN1-00).